Consider the following 222-residue polypeptide: Ribose-5-phosphate isomerase A (222 aa).

Substrate is bound by residues 29–32, 82–85, and 95–98; these read TGST, DSAD, and KGGG. The Proton acceptor role is filled by Glu104. A substrate-binding site is contributed by Lys122.

It belongs to the ribose 5-phosphate isomerase family. As to quaternary structure, homodimer.

It carries out the reaction aldehydo-D-ribose 5-phosphate = D-ribulose 5-phosphate. It participates in carbohydrate degradation; pentose phosphate pathway; D-ribose 5-phosphate from D-ribulose 5-phosphate (non-oxidative stage): step 1/1. In terms of biological role, catalyzes the reversible conversion of ribose-5-phosphate to ribulose 5-phosphate. This Blochmanniella floridana protein is Ribose-5-phosphate isomerase A.